The primary structure comprises 320 residues: Tabersonine synthase (320 aa).

Residues 78-80 (HGA) carry the Involved in the stabilization of the negatively charged intermediate by the formation of the oxyanion hole motif. Gly81 lines the (-)-tabersonine pocket. The Proton acceptor role is filled by Ser170. Asp266 is an active-site residue. Residue Tyr297 participates in (-)-tabersonine binding. Tyr297 functions as the Proton donor/acceptor in the catalytic mechanism.

The protein belongs to the 'GDXG' lipolytic enzyme family. Interacts with dehydroprecondylocarpine acetate synthase (DPAS). As to expression, expressed in leaf epidermis.

It localises to the cytoplasm. Its subcellular location is the cytosol. It is found in the nucleus. The catalysed reaction is dehydrosecodine = (-)-tabersonine. It carries out the reaction dihydroprecondylocarpine acetate = (-)-tabersonine + acetate + H(+). It participates in alkaloid biosynthesis. In terms of biological role, component of iboga and aspidosperma monoterpenoid indole alkaloids (MIAs, e.g. tabersonine and catharanthine) biosynthesis pathway from 19E-geissoschizine, psychoactive compounds likely to be used in the treatment of opioid dependence. Catalyzes the conversion of dehydrosecodine to tabersonine, a precursor of vindoline; this process starts with the conversion of dihydroprecondylocarpine acetate to dehydrosecodine. In Catharanthus roseus (Madagascar periwinkle), this protein is Tabersonine synthase.